The sequence spans 333 residues: Mevalonate kinase (333 aa).

Residue 109 to 119 (PVGAGLGSSAA) participates in ATP binding. Asp-160 serves as the catalytic Proton acceptor.

This sequence belongs to the GHMP kinase family. Mevalonate kinase subfamily. As to quaternary structure, homodimer. Mg(2+) serves as cofactor.

It is found in the cytoplasm. It catalyses the reaction (R)-mevalonate + ATP = (R)-5-phosphomevalonate + ADP + H(+). It participates in isoprenoid biosynthesis; isopentenyl diphosphate biosynthesis via mevalonate pathway; isopentenyl diphosphate from (R)-mevalonate: step 1/3. In terms of biological role, catalyzes the phosphorylation of (R)-mevalonate (MVA) to (R)-mevalonate 5-phosphate (MVAP). Functions in the mevalonate (MVA) pathway leading to isopentenyl diphosphate (IPP), a key precursor for the biosynthesis of isoprenoid compounds such as archaeal membrane lipids. The sequence is that of Mevalonate kinase from Thermococcus sibiricus (strain DSM 12597 / MM 739).